We begin with the raw amino-acid sequence, 66 residues long: ATP synthase F(0) complex subunit 8 (66 aa).

Residues 8–24 form a helical membrane-spanning segment; that stretch reads TWLTMILSMFLVLFIIF. K54 bears the N6-acetyllysine; alternate mark. N6-succinyllysine; alternate is present on K54. K57 carries the post-translational modification N6-acetyllysine.

Belongs to the ATPase protein 8 family. As to quaternary structure, component of the ATP synthase complex composed at least of ATP5F1A/subunit alpha, ATP5F1B/subunit beta, ATP5MC1/subunit c (homooctomer), MT-ATP6/subunit a, MT-ATP8/subunit 8, ATP5ME/subunit e, ATP5MF/subunit f, ATP5MG/subunit g, ATP5MK/subunit k, ATP5MJ/subunit j, ATP5F1C/subunit gamma, ATP5F1D/subunit delta, ATP5F1E/subunit epsilon, ATP5PF/subunit F6, ATP5PB/subunit b, ATP5PD/subunit d, ATP5PO/subunit OSCP. ATP synthase complex consists of a soluble F(1) head domain (subunits alpha(3) and beta(3)) - the catalytic core - and a membrane F(0) domain - the membrane proton channel (subunits c, a, 8, e, f, g, k and j). These two domains are linked by a central stalk (subunits gamma, delta, and epsilon) rotating inside the F1 region and a stationary peripheral stalk (subunits F6, b, d, and OSCP). Interacts with PRICKLE3.

It is found in the mitochondrion membrane. In terms of biological role, subunit 8, of the mitochondrial membrane ATP synthase complex (F(1)F(0) ATP synthase or Complex V) that produces ATP from ADP in the presence of a proton gradient across the membrane which is generated by electron transport complexes of the respiratory chain. ATP synthase complex consist of a soluble F(1) head domain - the catalytic core - and a membrane F(1) domain - the membrane proton channel. These two domains are linked by a central stalk rotating inside the F(1) region and a stationary peripheral stalk. During catalysis, ATP synthesis in the catalytic domain of F(1) is coupled via a rotary mechanism of the central stalk subunits to proton translocation. In vivo, can only synthesize ATP although its ATP hydrolase activity can be activated artificially in vitro. Part of the complex F(0) domain. In Ovis aries (Sheep), this protein is ATP synthase F(0) complex subunit 8.